Consider the following 254-residue polypeptide: Short-chain dehydrogenase srdF (254 aa).

Ile18, Ser37, Glu67, Asn95, Tyr167, Lys171, Val199, and Thr201 together coordinate NADP(+). The Proton donor role is filled by Tyr167. Lys171 acts as the Lowers pKa of active site Tyr in catalysis.

The protein belongs to the short-chain dehydrogenases/reductases (SDR) family.

Its function is as follows. Short-chain dehydrogenase; part of the gene cluster that mediates the biosynthesis of sordarial, a salicylic aldehyde structurally related to the phytotoxin pyriculol. The most interesting aspect of this pathway is formation of an aromatic product from the highly reducing polyketide synthase srdA. SrdA synthesizes a reduced polyketide chain from one molecule of acetyl-CoA and five molecules of malonyl-CoA. The polyketide chain is then reductively released as an aldehyde. The oxidoreductases srdC, srdD and srdE then oxidize one of the hydroxy groups to facilitate the intramolecular aldol condensation, followed by dehydration to yield a salicylic aldehyde. This aldehyde can undergo facile reduction by endogenous reductases to yield the alcohol 1-hydroxy-2-hydroxymethyl-3-pent-1,3-dienylbenzene. The flavin-dependent srdI counteract against the propensity of the aldehydes to be reduced under physiological conditions and is responsible for reoxidizing 1-hydroxy-2-hydroxymethyl-3-pent-1,3-dienylbenzene back to the salicylic aldehyde. This salicylic aldehyde is then selectively epoxidized by the cupin-domain-containing oxidoreductase srdB to yield the epoxide, which can be hydrolyzed stereoselectively by the hydrolase srdG to give the final product sordarial. The protein is Short-chain dehydrogenase srdF of Neurospora crassa (strain ATCC 24698 / 74-OR23-1A / CBS 708.71 / DSM 1257 / FGSC 987).